We begin with the raw amino-acid sequence, 1164 residues long: DNA-directed RNA polymerase subunit beta (1164 aa).

Belongs to the RNA polymerase beta chain family. The RNAP catalytic core consists of 2 alpha, 1 beta, 1 beta' and 1 omega subunit. When a sigma factor is associated with the core the holoenzyme is formed, which can initiate transcription.

It carries out the reaction RNA(n) + a ribonucleoside 5'-triphosphate = RNA(n+1) + diphosphate. DNA-dependent RNA polymerase catalyzes the transcription of DNA into RNA using the four ribonucleoside triphosphates as substrates. This chain is DNA-directed RNA polymerase subunit beta, found in Saccharopolyspora erythraea (strain ATCC 11635 / DSM 40517 / JCM 4748 / NBRC 13426 / NCIMB 8594 / NRRL 2338).